We begin with the raw amino-acid sequence, 403 residues long: S-adenosylmethionine synthase (403 aa).

An ATP-binding site is contributed by His17. Asp19 is a Mg(2+) binding site. Glu45 lines the K(+) pocket. The L-methionine site is built by Glu58 and Gln104. Residues 104–114 (QSPDIAQGVDT) are flexible loop. ATP contacts are provided by residues 179 to 181 (DGK), 250 to 251 (KF), Asp259, 265 to 266 (RK), Ala282, and Lys286. Asp259 serves as a coordination point for L-methionine. Lys290 lines the L-methionine pocket.

It belongs to the AdoMet synthase family. In terms of assembly, homotetramer; dimer of dimers. Requires Mg(2+) as cofactor. It depends on K(+) as a cofactor.

Its subcellular location is the cytoplasm. It catalyses the reaction L-methionine + ATP + H2O = S-adenosyl-L-methionine + phosphate + diphosphate. The protein operates within amino-acid biosynthesis; S-adenosyl-L-methionine biosynthesis; S-adenosyl-L-methionine from L-methionine: step 1/1. Catalyzes the formation of S-adenosylmethionine (AdoMet) from methionine and ATP. The overall synthetic reaction is composed of two sequential steps, AdoMet formation and the subsequent tripolyphosphate hydrolysis which occurs prior to release of AdoMet from the enzyme. The sequence is that of S-adenosylmethionine synthase from Mycobacterium marinum (strain ATCC BAA-535 / M).